The following is a 301-amino-acid chain: GTPase Era (301 aa).

Residues 4–173 (KAGFVALIGK…LECISKHLIP (170 aa)) form the Era-type G domain. Residues 12–19 (GKPNAGKS) are G1. 12–19 (GKPNAGKS) is a binding site for GTP. A G2 region spans residues 38-42 (NATRK). The tract at residues 64 to 67 (DTPG) is G3. Residues 64-68 (DTPGL) and 122-125 (SKID) each bind GTP. Positions 122 to 125 (SKID) are G4. The G5 stretch occupies residues 152–154 (LSA). The 77-residue stretch at 204–280 (LSDEIPYESD…FLNLQVIAQK (77 aa)) folds into the KH type-2 domain.

Belongs to the TRAFAC class TrmE-Era-EngA-EngB-Septin-like GTPase superfamily. Era GTPase family. In terms of assembly, monomer.

Its subcellular location is the cytoplasm. It is found in the cell inner membrane. An essential GTPase that binds both GDP and GTP, with rapid nucleotide exchange. Plays a role in 16S rRNA processing and 30S ribosomal subunit biogenesis and possibly also in cell cycle regulation and energy metabolism. The chain is GTPase Era from Helicobacter pylori (strain HPAG1).